We begin with the raw amino-acid sequence, 933 residues long: DNA replication licensing factor MCM4 (933 aa).

Disordered regions lie at residues 1–149 (MSQQ…PRRI) and 154–173 (TRSG…PSEA). Residues 27–42 (PPQLSSPALFYSSSSS) show a composition bias toward low complexity. Polar residues-rich tracts occupy residues 49–59 (RNNSQNLSQGE) and 69–85 (SPLN…SDVF). Phosphoserine occurs at positions 52, 56, and 69. Low complexity predominate over residues 86 to 103 (QSQGRQGRIRSSASASGR). Positions 117 to 129 (PTSSSSLGRNGQN) are enriched in polar residues. Residues 164–173 (SSSSAPPSEA) show a composition bias toward low complexity. The MCM domain occupies 518 to 725 (LYSLLARSIA…NDRELAKHLT (208 aa)). 568-575 (GDPSTSKS) serves as a coordination point for ATP. The Arginine finger signature appears at 700-703 (SRFD).

The protein belongs to the MCM family. As to quaternary structure, component of the MCM2-7 complex. The complex forms a toroidal hexameric ring with the proposed subunit order MCM2-MCM6-MCM4-MCM7-MCM3-MCM5; loaded onto DNA, forms a head-head double hexamer.

Its subcellular location is the nucleus. It catalyses the reaction ATP + H2O = ADP + phosphate + H(+). In terms of biological role, acts as a component of the MCM2-7 complex (MCM complex) which is the putative replicative helicase essential for 'once per cell cycle' DNA replication initiation and elongation in eukaryotic cells. The active ATPase sites in the MCM2-7 ring are formed through the interaction surfaces of two neighboring subunits such that a critical structure of a conserved arginine finger motif is provided in trans relative to the ATP-binding site of the Walker A box of the adjacent subunit. The six ATPase active sites, however, are likely to contribute differentially to the complex helicase activity. Once loaded onto DNA, double hexamers can slide on dsDNA in the absence of ATPase activity. Required for S phase execution. In Saccharomyces cerevisiae (strain ATCC 204508 / S288c) (Baker's yeast), this protein is DNA replication licensing factor MCM4 (MCM4).